We begin with the raw amino-acid sequence, 166 residues long: MALYEHVFLARQDASPQQVEELTAQMTGIVEGLGGKVTKTENWGVRSLTYRMNKNRKAHFVLLNIDAPSAAIAEIERQERISEDVIRYLSVRVEELEEGPSAMMRKADRDRERDDRGGGFRGEREGGFRGDREGGFRGGDRDGGGFRGDRGPRRPREEAETATDGE.

The disordered stretch occupies residues 97–166 (EEGPSAMMRK…EEAETATDGE (70 aa)). Over residues 105-159 (RKADRDRERDDRGGGFRGEREGGFRGDREGGFRGGDRDGGGFRGDRGPRRPREEA) the composition is skewed to basic and acidic residues.

Belongs to the bacterial ribosomal protein bS6 family.

Binds together with bS18 to 16S ribosomal RNA. The polypeptide is Small ribosomal subunit protein bS6 (Bradyrhizobium diazoefficiens (strain JCM 10833 / BCRC 13528 / IAM 13628 / NBRC 14792 / USDA 110)).